A 465-amino-acid chain; its full sequence is Flavin-containing monooxygenase FMO GS-OX-like 2 (465 aa).

18–23 (GAGAAG) lines the FAD pocket. Residue 217–222 (GSSASG) coordinates NADP(+).

This sequence belongs to the FMO family. FAD is required as a cofactor.

Catalyzes the conversion of methylthioalkyl glucosinolates of any chain length into methylsulfinylalkyl glucosinolates. This is Flavin-containing monooxygenase FMO GS-OX-like 2 from Arabidopsis thaliana (Mouse-ear cress).